The following is a 203-amino-acid chain: Acireductone dioxygenase 3 (203 aa).

4 residues coordinate Fe(2+): histidine 96, histidine 98, glutamate 102, and histidine 141. Histidine 96, histidine 98, glutamate 102, and histidine 141 together coordinate Ni(2+).

It belongs to the acireductone dioxygenase (ARD) family. The cofactor is Fe(2+). Requires Ni(2+) as cofactor.

It is found in the cytoplasm. Its subcellular location is the nucleus. The catalysed reaction is 1,2-dihydroxy-5-(methylsulfanyl)pent-1-en-3-one + O2 = 4-methylsulfanyl-2-oxobutanoate + formate + 2 H(+). It catalyses the reaction 1,2-dihydroxy-5-(methylsulfanyl)pent-1-en-3-one + O2 = 3-(methylsulfanyl)propanoate + CO + formate + 2 H(+). It functions in the pathway amino-acid biosynthesis; L-methionine biosynthesis via salvage pathway; L-methionine from S-methyl-5-thio-alpha-D-ribose 1-phosphate: step 5/6. Catalyzes 2 different reactions between oxygen and the acireductone 1,2-dihydroxy-3-keto-5-methylthiopentene (DHK-MTPene) depending upon the metal bound in the active site. Fe-containing acireductone dioxygenase (Fe-ARD) produces formate and 2-keto-4-methylthiobutyrate (KMTB), the alpha-ketoacid precursor of methionine in the methionine recycle pathway. Ni-containing acireductone dioxygenase (Ni-ARD) produces methylthiopropionate, carbon monoxide and formate, and does not lie on the methionine recycle pathway. This Physcomitrium patens (Spreading-leaved earth moss) protein is Acireductone dioxygenase 3.